Reading from the N-terminus, the 806-residue chain is Lysine-specific demethylase JMJ15 (806 aa).

Residues 1–43 (MEPFSAAQNKEDKDTSVEPPRRRCHRKNKGTNVEPPSSPYHPK) form a disordered region. The segment covering 9 to 21 (NKEDKDTSVEPPR) has biased composition (basic and acidic residues). The region spanning 61-102 (APVFHPTSEEFEDTLAYIEKIRPLAESFGICRIVPPSNWSPP) is the JmjN domain. The interval 128–176 (NRGPVKKKTPKGRKRKRGKYSRTVAPKKRNGSVSKSVSTPKATEEENFG) is disordered. Positions 131 to 157 (PVKKKTPKGRKRKRGKYSRTVAPKKRN) are enriched in basic residues. The Nuclear localization signal motif lies at 132-139 (VKKKTPKG). Polar residues predominate over residues 158-168 (GSVSKSVSTPK). One can recognise a JmjC domain in the interval 261-427 (KYISSGWNLN…HGQNAVEIYS (167 aa)). Residues H307, E309, and H395 each contribute to the Fe cation site. Zn(2+) contacts are provided by C514, C517, C528, C531, C539, H542, C545, and C547. Residues 514–566 (CISCFSDLHLSATGCKNCSSLEEYGCTKHDICSCEGKDRFIFLRYTIDELSSL) form a C5HC2 zinc finger. The 59-residue stretch at 629–687 (IMDLAAYHVEPINLGFLVVGKLWCNKHAIFPKGFKSRVKFYNVQDPMRISYYVSEIVDA) folds into the FYR N-terminal domain. The FYR C-terminal domain maps to 689 to 775 (LLGPLFKVTL…HGQVEYWNHK (87 aa)).

This sequence belongs to the JARID1 histone demethylase family. Requires Fe(2+) as cofactor. In terms of tissue distribution, expressed in roots, cotyledons, shoot apex, rosette and cauline leaves, stems, inflorescences and siliques. Expressed at low levels during vegetative growth but to higher levels in young floral organs.

It localises to the nucleus. It catalyses the reaction N(6),N(6),N(6)-trimethyl-L-lysyl(4)-[histone H3] + 2-oxoglutarate + O2 = N(6),N(6)-dimethyl-L-lysyl(4)-[histone H3] + formaldehyde + succinate + CO2. Histone demethylase that demethylates 'Lys-4' (H3K4me) of histone H3 with a specific activity for H3K4me3. No activity on H3K4me2, H3K4me1, H3K9me3/2, H3K27me3/2 and H3K36me3/2. Involved in the control of flowering time by demethylating H3K4me3 at the FLC locus and repressing its expression. The repression of FLC level and reduction in H3K4me3 at the FLC locus results in induction of the flowering activator FT, which is a downstream target of FLC. Promotes salt tolerance by down-regulating the expression of several transcriptions factors involved in stress responses via H3K4me3 and H3K4me2 demethylation. This is Lysine-specific demethylase JMJ15 from Arabidopsis thaliana (Mouse-ear cress).